Consider the following 144-residue polypeptide: Large ribosomal subunit protein uL16 (144 aa).

It belongs to the universal ribosomal protein uL16 family. Part of the 50S ribosomal subunit.

In terms of biological role, binds 23S rRNA and is also seen to make contacts with the A and possibly P site tRNAs. The polypeptide is Large ribosomal subunit protein uL16 (Erythrobacter litoralis (strain HTCC2594)).